Reading from the N-terminus, the 290-residue chain is 33 kDa chaperonin (290 aa).

Intrachain disulfides connect cysteine 235–cysteine 237 and cysteine 268–cysteine 271.

Belongs to the HSP33 family. In terms of processing, under oxidizing conditions two disulfide bonds are formed involving the reactive cysteines. Under reducing conditions zinc is bound to the reactive cysteines and the protein is inactive.

It localises to the cytoplasm. Its function is as follows. Redox regulated molecular chaperone. Protects both thermally unfolding and oxidatively damaged proteins from irreversible aggregation. Plays an important role in the bacterial defense system toward oxidative stress. The sequence is that of 33 kDa chaperonin from Streptococcus pyogenes serotype M49.